The primary structure comprises 138 residues: Nucleoside diphosphate kinase (138 aa).

ATP contacts are provided by Lys-12, Tyr-60, Arg-88, Thr-94, Arg-105, and Asn-115. His-118 functions as the Pros-phosphohistidine intermediate in the catalytic mechanism.

It belongs to the NDK family. In terms of assembly, homotetramer. Requires Mg(2+) as cofactor.

The protein resides in the cytoplasm. The catalysed reaction is a 2'-deoxyribonucleoside 5'-diphosphate + ATP = a 2'-deoxyribonucleoside 5'-triphosphate + ADP. It carries out the reaction a ribonucleoside 5'-diphosphate + ATP = a ribonucleoside 5'-triphosphate + ADP. In terms of biological role, major role in the synthesis of nucleoside triphosphates other than ATP. The ATP gamma phosphate is transferred to the NDP beta phosphate via a ping-pong mechanism, using a phosphorylated active-site intermediate. The chain is Nucleoside diphosphate kinase from Cutibacterium acnes (strain DSM 16379 / KPA171202) (Propionibacterium acnes).